The chain runs to 270 residues: Replication protein A 32 kDa subunit (270 aa).

Methionine 1 bears the N-acetylmethionine mark. Serine 4 and serine 8 each carry phosphoserine; by PRKDC. Threonine 21 carries the post-translational modification Phosphothreonine; by PRKDC. Positions 22 to 41 (QSPGGFGSPTPSQAEKKSRA) are disordered. Residue serine 23 is modified to Phosphoserine; by CDK2. The residue at position 29 (serine 29) is a Phosphoserine; by CDK1. Serine 33 carries the phosphoserine; by PRKDC modification. Glycyl lysine isopeptide (Lys-Gly) (interchain with G-Cter in ubiquitin) cross-links involve residues lysine 37 and lysine 38. The OB DNA-binding region spans 74-148 (VTIVGIIRHA…KSLVAFKIIP (75 aa)). The segment at 187–270 (GMGEPGNFSG…DDHFKSTDAE (84 aa)) is interaction with RAD52, TIPIN, UNG and XPA.

This sequence belongs to the replication factor A protein 2 family. Component of the replication protein A complex (RPA/RP-A), a heterotrimeric complex composed of RPA1, RPA2 and RPA3. Interacts with PRPF19; the PRP19-CDC5L complex is recruited to the sites of DNA repair where it ubiquitinates the replication protein A complex (RPA). Interacts with SERTAD3. Interacts with TIPIN. Interacts with TIMELESS. Interacts with PPP4R2; the interaction is direct, DNA damage-dependent and mediates the recruitment of the PP4 catalytic subunit PPP4C. Interacts (hyperphosphorylated) with RAD51. Interacts with SMARCAL1; the interaction is direct and mediates the recruitment to the RPA complex of SMARCAL1. Interacts with RAD52 and XPA; those interactions are direct and associate RAD52 and XPA to the RPA complex. Interacts with FBH1. Interacts with ETAA1; the interaction is direct and promotes ETAA1 recruitment at stalled replication forks. Interacts with DDI2. Interacts (in unphosphorylated form via N-terminus) with EIF4EBP3; the interaction enhances EIF4EBP3-mediated inhibition of EIF4E-mediated mRNA nuclear export. Interacts with nuclear UNG (isoform 2); this interaction mediates UNG recruitment to RPA-coated single-stranded DNA at stalled replication forks. Post-translationally, differentially phosphorylated throughout the cell cycle, becoming phosphorylated at the G1-S transition and dephosphorylated in late mitosis. Mainly phosphorylated at Ser-23 and Ser-29, by cyclin A-CDK2 and cyclin B-CDK1, respectively during DNA replication and mitosis. Dephosphorylation may require the serine/threonine-protein phosphatase 4. Phosphorylation at Ser-23 and Ser-29 is a prerequisite for further phosphorylation. Becomes hyperphosphorylated on additional residues including Ser-4, Ser-8, Thr-21 and Ser-33 in response to DNA damage. Hyperphosphorylation is mediated by ATM, ATR and PRKDC. Primarily recruited to DNA repair nuclear foci as a hypophosphorylated form it undergoes subsequent hyperphosphorylation, catalyzed by ATR. Hyperphosphorylation is required for RAD51 recruitment to chromatin and efficient DNA repair. Phosphorylation at Thr-21 depends upon RFWD3 presence. DNA damage-induced 'Lys-63'-linked polyubiquitination by PRPF19 mediates ATRIP recruitment to the RPA complex at sites of DNA damage and activation of ATR. Ubiquitinated by RFWD3 at stalled replication forks in response to DNA damage: ubiquitination by RFWD3 does not lead to degradation by the proteasome and promotes removal of the RPA complex from stalled replication forks, promoting homologous recombination.

It localises to the nucleus. The protein localises to the PML body. In terms of biological role, as part of the heterotrimeric replication protein A complex (RPA/RP-A), binds and stabilizes single-stranded DNA intermediates, that form during DNA replication or upon DNA stress. It prevents their reannealing and in parallel, recruits and activates different proteins and complexes involved in DNA metabolism. Thereby, it plays an essential role both in DNA replication and the cellular response to DNA damage. In the cellular response to DNA damage, the RPA complex controls DNA repair and DNA damage checkpoint activation. Through recruitment of ATRIP activates the ATR kinase a master regulator of the DNA damage response. It is required for the recruitment of the DNA double-strand break repair factors RAD51 and RAD52 to chromatin in response to DNA damage. Also recruits to sites of DNA damage proteins like XPA and XPG that are involved in nucleotide excision repair and is required for this mechanism of DNA repair. Also plays a role in base excision repair (BER) probably through interaction with UNG. Also recruits SMARCAL1/HARP, which is involved in replication fork restart, to sites of DNA damage. May also play a role in telomere maintenance. The sequence is that of Replication protein A 32 kDa subunit (Rpa2) from Rattus norvegicus (Rat).